A 227-amino-acid polypeptide reads, in one-letter code: A-type potassium channel modulatory protein KCNIP1 (227 aa).

Residues 38-94 (LEMTMVCHRPEGLEQLEAQTNFTKRELQVLYRGFKNECPSGVVNEDTFKQIYAQFFP) enclose the EF-hand 1; degenerate domain. 3 consecutive EF-hand domains span residues 97–132 (DASTYAHYLFNAFDTTQTGSVKFEDFVTALSILLRG), 133–168 (TVHEKLRWTFNLYDINKDGYINKEEMMDIVKAIYDM), and 181–216 (TPRQHVDVFFQKMDKNKDGIVTLDEFLESCQEDDNI). Residues D146, N148, D150, Y152, E157, D194, N196, D198, and E205 each contribute to the Ca(2+) site. The interval 214 to 227 (DNIMRSLQLFQNVM) is interaction with KCND2.

The protein belongs to the recoverin family. In terms of assembly, component of heteromultimeric potassium channels. Identified in potassium channel complexes containing KCND1, KCND2, KCND3, KCNIP1, KCNIP2, KCNIP3, KCNIP4, DPP6 and DPP10. Part of a heterooctamer composed of the tetrameric channel and four KCNIP1 chains. Probably part of a complex consisting of KCNIP1, KCNIP2 isoform 3 and KCND2. Self-associates to form homodimers and homotetramers. Interacts with KCNIP2 isoform 3 in a calcium-dependent manner. Interacts with Naja atra venom CTX3. Interacts with KCND2; this interaction mediates the capture of both the N- and C-terminus of KCND2, thus preventing KCND2 N-type inactivation and modulates the channel gating kinetics. Interacts with KCND3; each KCNIP1 monomer interacts with two adjacent KCND3 subunits, through both the N-terminal inactivation ball of a KCND3 subunit and a C-terminal helix from the adjacent KCND3 subunit, clamping them together; this interaction stabilizes the tetrameric form and modulates the channel gating kinetics namely channel activation and inactivation kinetics and rate of recovery from inactivation. Isoform 1 and isoform 2 are expressed in brain and kidney. Isoform 1 is also expressed in liver, pancreas, skeletal muscle, small intestine and testis. Isoform 2 is also expressed in lung, pancreas, leukocytes, prostate and thymus.

It is found in the cell membrane. The protein localises to the cytoplasm. The protein resides in the cell projection. It localises to the dendrite. In terms of biological role, regulatory subunit of Kv4/D (Shal)-type voltage-gated rapidly inactivating A-type potassium channels. Regulates channel density, inactivation kinetics and rate of recovery from inactivation in a calcium-dependent and isoform-specific manner. In vitro, modulates KCND1/Kv4.1 and KCND2/Kv4.2 currents. Increases the presence of KCND2 at the cell surface. The chain is A-type potassium channel modulatory protein KCNIP1 from Homo sapiens (Human).